The following is a 342-amino-acid chain: Cilia- and flagella-associated protein 36 (342 aa).

S85 and S147 each carry phosphoserine. A coiled-coil region spans residues E150 to E187. A disordered region spans residues E166–E194. Positions Q179–T189 are enriched in basic and acidic residues. S201 bears the Phosphoserine mark. Disordered stretches follow at residues R229–E250 and K282–K322. Composition is skewed to basic and acidic residues over residues K282–T292 and Q300–K322.

Belongs to the CFAP36 family. Interacts with ARL3. Expressed in several human tissues including brain, testis, heart, lung, pancreas and spleen (at protein level).

It localises to the nucleus. The protein localises to the cytoplasm. It is found in the cell projection. Its subcellular location is the cilium. The protein resides in the flagellum. May act as an effector for ARL3. This Homo sapiens (Human) protein is Cilia- and flagella-associated protein 36 (CFAP36).